A 259-amino-acid polypeptide reads, in one-letter code: Deoxyribose-phosphate aldolase (259 aa).

Catalysis depends on aspartate 102, which acts as the Proton donor/acceptor. The active-site Schiff-base intermediate with acetaldehyde is lysine 167. Catalysis depends on lysine 201, which acts as the Proton donor/acceptor.

The protein belongs to the DeoC/FbaB aldolase family. DeoC type 2 subfamily.

Its subcellular location is the cytoplasm. It carries out the reaction 2-deoxy-D-ribose 5-phosphate = D-glyceraldehyde 3-phosphate + acetaldehyde. The protein operates within carbohydrate degradation; 2-deoxy-D-ribose 1-phosphate degradation; D-glyceraldehyde 3-phosphate and acetaldehyde from 2-deoxy-alpha-D-ribose 1-phosphate: step 2/2. Catalyzes a reversible aldol reaction between acetaldehyde and D-glyceraldehyde 3-phosphate to generate 2-deoxy-D-ribose 5-phosphate. This chain is Deoxyribose-phosphate aldolase, found in Escherichia coli O1:K1 / APEC.